We begin with the raw amino-acid sequence, 158 residues long: Phosphopantetheine adenylyltransferase (158 aa).

A substrate-binding site is contributed by T10. Residues T10–F11 and H18 contribute to the ATP site. Positions 42, 74, and 88 each coordinate substrate. Residues G89 to R91, E99, and W124 to T130 each bind ATP.

It belongs to the bacterial CoaD family. In terms of assembly, homohexamer. The cofactor is Mg(2+).

Its subcellular location is the cytoplasm. It catalyses the reaction (R)-4'-phosphopantetheine + ATP + H(+) = 3'-dephospho-CoA + diphosphate. It participates in cofactor biosynthesis; coenzyme A biosynthesis; CoA from (R)-pantothenate: step 4/5. Reversibly transfers an adenylyl group from ATP to 4'-phosphopantetheine, yielding dephospho-CoA (dPCoA) and pyrophosphate. The polypeptide is Phosphopantetheine adenylyltransferase (Actinobacillus pleuropneumoniae serotype 5b (strain L20)).